Consider the following 305-residue polypeptide: Tyrosine recombinase XerC (305 aa).

Positions 4–95 (TSIQALINKW…AVKNFYRFLE (92 aa)) constitute a Core-binding (CB) domain. The region spanning 116–298 (LLPKALSEDD…SIKHLEAVYT (183 aa)) is the Tyr recombinase domain. Residues arginine 159, lysine 182, histidine 250, arginine 253, and histidine 276 contribute to the active site. The active-site O-(3'-phospho-DNA)-tyrosine intermediate is tyrosine 285.

This sequence belongs to the 'phage' integrase family. XerC subfamily. As to quaternary structure, forms a cyclic heterotetrameric complex composed of two molecules of XerC and two molecules of XerD.

The protein localises to the cytoplasm. Its function is as follows. Site-specific tyrosine recombinase, which acts by catalyzing the cutting and rejoining of the recombining DNA molecules. The XerC-XerD complex is essential to convert dimers of the bacterial chromosome into monomers to permit their segregation at cell division. It also contributes to the segregational stability of plasmids. The polypeptide is Tyrosine recombinase XerC (Rickettsia rickettsii (strain Iowa)).